The following is a 210-amino-acid chain: Large ribosomal subunit protein uL4 (210 aa).

The segment covering Gln-41 to Lys-52 has biased composition (polar residues). The tract at residues Gln-41 to Gly-71 is disordered. Residues Gly-60–Gly-71 show a composition bias toward basic residues.

It belongs to the universal ribosomal protein uL4 family. Part of the 50S ribosomal subunit.

In terms of biological role, one of the primary rRNA binding proteins, this protein initially binds near the 5'-end of the 23S rRNA. It is important during the early stages of 50S assembly. It makes multiple contacts with different domains of the 23S rRNA in the assembled 50S subunit and ribosome. Forms part of the polypeptide exit tunnel. This chain is Large ribosomal subunit protein uL4, found in Trichormus variabilis (strain ATCC 29413 / PCC 7937) (Anabaena variabilis).